A 348-amino-acid polypeptide reads, in one-letter code: NADH-ubiquinone oxidoreductase chain 2 (348 aa).

9 helical membrane-spanning segments follow: residues 13–33 (VGLG…WMGL), 60–80 (FLTQ…NAWM), 93–113 (IAST…PMHF), 149–169 (IDPL…GWGG), 178–197 (ILAY…IQYA), 202–219 (LIAL…FLTL), 246–266 (LVLL…KWLI), 274–294 (DLPI…YFYL), and 326–346 (LALF…ILML).

Belongs to the complex I subunit 2 family.

The protein localises to the mitochondrion inner membrane. It carries out the reaction a ubiquinone + NADH + 5 H(+)(in) = a ubiquinol + NAD(+) + 4 H(+)(out). In terms of biological role, core subunit of the mitochondrial membrane respiratory chain NADH dehydrogenase (Complex I) that is believed to belong to the minimal assembly required for catalysis. Complex I functions in the transfer of electrons from NADH to the respiratory chain. The immediate electron acceptor for the enzyme is believed to be ubiquinone. The sequence is that of NADH-ubiquinone oxidoreductase chain 2 (MT-ND2) from Cyprinus carpio (Common carp).